A 372-amino-acid chain; its full sequence is Glutamate 5-kinase (372 aa).

Lys9 lines the ATP pocket. Positions 49, 136, and 148 each coordinate substrate. Residues 168–169 (TD) and 210–216 (TGGMKSK) each bind ATP. Positions 276-360 (EGKVFIDDGA…PAIEVIHRDS (85 aa)) constitute a PUA domain.

It belongs to the glutamate 5-kinase family.

The protein resides in the cytoplasm. It catalyses the reaction L-glutamate + ATP = L-glutamyl 5-phosphate + ADP. The protein operates within amino-acid biosynthesis; L-proline biosynthesis; L-glutamate 5-semialdehyde from L-glutamate: step 1/2. Functionally, catalyzes the transfer of a phosphate group to glutamate to form L-glutamate 5-phosphate. The polypeptide is Glutamate 5-kinase (Oceanobacillus iheyensis (strain DSM 14371 / CIP 107618 / JCM 11309 / KCTC 3954 / HTE831)).